The sequence spans 399 residues: Tryptophan synthase beta chain (399 aa).

K90 is subject to N6-(pyridoxal phosphate)lysine.

It belongs to the TrpB family. Tetramer of two alpha and two beta chains. Requires pyridoxal 5'-phosphate as cofactor.

The catalysed reaction is (1S,2R)-1-C-(indol-3-yl)glycerol 3-phosphate + L-serine = D-glyceraldehyde 3-phosphate + L-tryptophan + H2O. The protein operates within amino-acid biosynthesis; L-tryptophan biosynthesis; L-tryptophan from chorismate: step 5/5. In terms of biological role, the beta subunit is responsible for the synthesis of L-tryptophan from indole and L-serine. This Bacillus pumilus (strain SAFR-032) protein is Tryptophan synthase beta chain.